The following is a 260-amino-acid chain: Imidazole glycerol phosphate synthase subunit HisF (260 aa).

Residues Asp11 and Asp130 contribute to the active site.

The protein belongs to the HisA/HisF family. As to quaternary structure, heterodimer of HisH and HisF.

The protein resides in the cytoplasm. It carries out the reaction 5-[(5-phospho-1-deoxy-D-ribulos-1-ylimino)methylamino]-1-(5-phospho-beta-D-ribosyl)imidazole-4-carboxamide + L-glutamine = D-erythro-1-(imidazol-4-yl)glycerol 3-phosphate + 5-amino-1-(5-phospho-beta-D-ribosyl)imidazole-4-carboxamide + L-glutamate + H(+). It participates in amino-acid biosynthesis; L-histidine biosynthesis; L-histidine from 5-phospho-alpha-D-ribose 1-diphosphate: step 5/9. In terms of biological role, IGPS catalyzes the conversion of PRFAR and glutamine to IGP, AICAR and glutamate. The HisF subunit catalyzes the cyclization activity that produces IGP and AICAR from PRFAR using the ammonia provided by the HisH subunit. The chain is Imidazole glycerol phosphate synthase subunit HisF from Psychrobacter arcticus (strain DSM 17307 / VKM B-2377 / 273-4).